A 692-amino-acid chain; its full sequence is Proprotein convertase subtilisin/kexin type 9 (692 aa).

A signal peptide spans 1-30 (MGTVSSRRSWWPLPLLLLLLLLLGPAGARA). The propeptide occupies 31-152 (QEDEDGDYEE…IEEDSSVFAQ (122 aa)). Position 38 is a sulfotyrosine (Tyr-38). Position 47 is a phosphoserine (Ser-47). Residues 77-149 (TYVVVLKEET…VDYIEEDSSV (73 aa)) form the Inhibitor I9 domain. Residues 155-461 (PWNLERITPP…GWQLFCRTVW (307 aa)) form the Peptidase S8 domain. Catalysis depends on charge relay system residues Asp-186 and His-226. Intrachain disulfides connect Cys-223/Cys-255 and Cys-323/Cys-358. Ser-386 (charge relay system) is an active-site residue. The interval 450 to 692 (GAGWQLFCRT…HLAQASQELQ (243 aa)) is C-terminal domain. 3 disulfide bridges follow: Cys-457–Cys-527, Cys-477–Cys-526, and Cys-486–Cys-509. Asn-533 carries an N-linked (GlcNAc...) asparagine glycan. Intrachain disulfides connect Cys-534/Cys-601, Cys-552/Cys-600, Cys-562/Cys-588, Cys-608/Cys-679, Cys-626/Cys-678, and Cys-635/Cys-654. Position 688 is a phosphoserine (Ser-688).

It belongs to the peptidase S8 family. In terms of assembly, monomer. Can self-associate to form dimers and higher multimers which may have increased LDLR degrading activity. The precursor protein but not the mature protein may form multimers. Interacts with APOB, VLDLR, LRP8/APOER2 and BACE1. The full-length immature form (pro-PCSK9) interacts with SCNN1A, SCNN1B and SCNN1G. The pro-PCSK9 form (via C-terminal domain) interacts with LDLR. Interacts (via the C-terminal domain) with ANXA2 (via repeat Annexin 1); the interaction inhibits the degradation of LDLR. The cofactor is Ca(2+). Post-translationally, cleavage by furin and PCSK5 generates a truncated inactive protein that is unable to induce LDLR degradation. In terms of processing, undergoes autocatalytic cleavage in the endoplasmic reticulum to release the propeptide from the N-terminus and the cleavage of the propeptide is strictly required for its maturation and activation. The cleaved propeptide however remains associated with the catalytic domain through non-covalent interactions, preventing potential substrates from accessing its active site. As a result, it is secreted from cells as a propeptide-containing, enzymatically inactive protein. Phosphorylation protects the propeptide against proteolysis.

It localises to the cytoplasm. The protein localises to the secreted. Its subcellular location is the endosome. The protein resides in the lysosome. It is found in the cell surface. It localises to the endoplasmic reticulum. The protein localises to the golgi apparatus. With respect to regulation, its proteolytic activity is autoinhibited by the non-covalent binding of the propeptide to the catalytic domain. Inhibited by EGTA. In terms of biological role, crucial player in the regulation of plasma cholesterol homeostasis. Binds to low-density lipid receptor family members: low density lipoprotein receptor (LDLR), very low density lipoprotein receptor (VLDLR), apolipoprotein E receptor (LRP1/APOER) and apolipoprotein receptor 2 (LRP8/APOER2), and promotes their degradation in intracellular acidic compartments. Acts via a non-proteolytic mechanism to enhance the degradation of the hepatic LDLR through a clathrin LDLRAP1/ARH-mediated pathway. May prevent the recycling of LDLR from endosomes to the cell surface or direct it to lysosomes for degradation. Can induce ubiquitination of LDLR leading to its subsequent degradation. Inhibits intracellular degradation of APOB via the autophagosome/lysosome pathway in a LDLR-independent manner. Involved in the disposal of non-acetylated intermediates of BACE1 in the early secretory pathway. Inhibits epithelial Na(+) channel (ENaC)-mediated Na(+) absorption by reducing ENaC surface expression primarily by increasing its proteasomal degradation. Regulates neuronal apoptosis via modulation of LRP8/APOER2 levels and related anti-apoptotic signaling pathways. The protein is Proprotein convertase subtilisin/kexin type 9 (PCSK9) of Pan troglodytes (Chimpanzee).